The primary structure comprises 318 residues: Homoserine kinase (318 aa).

97–107 contacts ATP; sequence PIGSGLGSSAC.

The protein belongs to the GHMP kinase family. Homoserine kinase subfamily.

It localises to the cytoplasm. The enzyme catalyses L-homoserine + ATP = O-phospho-L-homoserine + ADP + H(+). It participates in amino-acid biosynthesis; L-threonine biosynthesis; L-threonine from L-aspartate: step 4/5. In terms of biological role, catalyzes the ATP-dependent phosphorylation of L-homoserine to L-homoserine phosphate. This is Homoserine kinase from Photobacterium profundum (strain SS9).